A 212-amino-acid chain; its full sequence is Pyridoxine/pyridoxamine 5'-phosphate oxidase (212 aa).

Substrate contacts are provided by residues 7–10 (RREY) and K66. FMN contacts are provided by residues 61–66 (RIVLLK), 76–77 (YT), R82, K83, and Q105. Substrate is bound by residues Y123, R127, and S131. FMN is bound by residues 140–141 (QS) and W185. Position 191-193 (191-193 (RLH)) interacts with substrate. R195 serves as a coordination point for FMN.

It belongs to the pyridoxamine 5'-phosphate oxidase family. Homodimer. Requires FMN as cofactor.

It catalyses the reaction pyridoxamine 5'-phosphate + O2 + H2O = pyridoxal 5'-phosphate + H2O2 + NH4(+). The enzyme catalyses pyridoxine 5'-phosphate + O2 = pyridoxal 5'-phosphate + H2O2. Its pathway is cofactor metabolism; pyridoxal 5'-phosphate salvage; pyridoxal 5'-phosphate from pyridoxamine 5'-phosphate: step 1/1. It participates in cofactor metabolism; pyridoxal 5'-phosphate salvage; pyridoxal 5'-phosphate from pyridoxine 5'-phosphate: step 1/1. Functionally, catalyzes the oxidation of either pyridoxine 5'-phosphate (PNP) or pyridoxamine 5'-phosphate (PMP) into pyridoxal 5'-phosphate (PLP). The polypeptide is Pyridoxine/pyridoxamine 5'-phosphate oxidase (Hahella chejuensis (strain KCTC 2396)).